The sequence spans 21 residues: MPDPAKTAPKKGSKKAVTKXA.

The disordered stretch occupies residues 1–21; sequence MPDPAKTAPKKGSKKAVTKXA. An N6-acetyllysine mark is found at lysine 6 and lysine 11. A compositionally biased stretch (basic residues) spans 8-21; it reads APKKGSKKAVTKXA. Phosphoserine is present on serine 13. 2 positions are modified to N6-acetyllysine: lysine 14 and lysine 19. A Glycyl lysine isopeptide (Lys-Gly) (interchain with G-Cter in ubiquitin) cross-link involves residue lysine 19.

This sequence belongs to the histone H2B family. In terms of assembly, the nucleosome is a histone octamer containing two molecules each of H2A, H2B, H3 and H4 assembled in one H3-H4 heterotetramer and two H2A-H2B heterodimers. The octamer wraps approximately 147 bp of DNA. In terms of processing, monoubiquitination at the C-terminal Lys gives a specific tag for epigenetic transcriptional activation and is also prerequisite for histone H3 'Lys-4' and 'Lys-79' methylation. Phosphorylated during apoptosis; which facilitates apoptotic chromatin condensation.

The protein resides in the nucleus. It is found in the chromosome. Core component of nucleosome. Nucleosomes wrap and compact DNA into chromatin, limiting DNA accessibility to the cellular machineries which require DNA as a template. Histones thereby play a central role in transcription regulation, DNA repair, DNA replication and chromosomal stability. DNA accessibility is regulated via a complex set of post-translational modifications of histones, also called histone code, and nucleosome remodeling. In terms of biological role, has broad-spectrum antimicrobial and antibacterial activity. It is important in the antimicrobial defenses of fish skin and possesses strong activity against saprolegnia, the most common fungal infection in fish. It is also inhibitory to fish bacterial pathogens, such as aeromonas hydrophila, vibrio alginolyticus and E.coli D31. The protein is Histone H2B 1 of Ictalurus punctatus (Channel catfish).